Reading from the N-terminus, the 429-residue chain is Histidinol dehydrogenase (429 aa).

Residues Tyr127, Gln188, and Asn211 each coordinate NAD(+). Substrate contacts are provided by Ser234, Gln256, and His259. Zn(2+)-binding residues include Gln256 and His259. Catalysis depends on proton acceptor residues Glu324 and His325. Substrate-binding residues include His325, Asp358, Glu412, and His417. A Zn(2+)-binding site is contributed by Asp358. His417 contributes to the Zn(2+) binding site.

It belongs to the histidinol dehydrogenase family. The cofactor is Zn(2+).

It catalyses the reaction L-histidinol + 2 NAD(+) + H2O = L-histidine + 2 NADH + 3 H(+). The protein operates within amino-acid biosynthesis; L-histidine biosynthesis; L-histidine from 5-phospho-alpha-D-ribose 1-diphosphate: step 9/9. In terms of biological role, catalyzes the sequential NAD-dependent oxidations of L-histidinol to L-histidinaldehyde and then to L-histidine. The chain is Histidinol dehydrogenase from Bacillus cereus (strain ATCC 10987 / NRS 248).